The chain runs to 282 residues: Polyamine aminopropyltransferase (282 aa).

In terms of domain architecture, PABS spans 11–239 (IEWYPRGYGV…SPWSFLVGVK (229 aa)). S-methyl-5'-thioadenosine is bound at residue Q36. Spermidine contacts are provided by H67 and D91. Residues E111 and 142 to 143 (DG) contribute to the S-methyl-5'-thioadenosine site. Catalysis depends on D160, which acts as the Proton acceptor. 160-163 (DSTD) provides a ligand contact to spermidine. An S-methyl-5'-thioadenosine-binding site is contributed by P167.

It belongs to the spermidine/spermine synthase family. Homodimer or homotetramer.

The protein localises to the cytoplasm. It carries out the reaction S-adenosyl 3-(methylsulfanyl)propylamine + putrescine = S-methyl-5'-thioadenosine + spermidine + H(+). It functions in the pathway amine and polyamine biosynthesis; spermidine biosynthesis; spermidine from putrescine: step 1/1. Functionally, catalyzes the irreversible transfer of a propylamine group from the amino donor S-adenosylmethioninamine (decarboxy-AdoMet) to putrescine (1,4-diaminobutane) to yield spermidine. The protein is Polyamine aminopropyltransferase of Thermococcus onnurineus (strain NA1).